Consider the following 553-residue polypeptide: Cytochrome P450 86A22 (553 aa).

Residues 8–24 (MIVAIVAAYLLWFKSIT) traverse the membrane as a helical segment. A heme-binding site is contributed by cysteine 459.

Belongs to the cytochrome P450 family. Heme serves as cofactor. As to expression, mostly expressed in the developing stigma of floral buds. Weakly detected in leaves, stems and flowers.

The protein resides in the membrane. The catalysed reaction is (9Z)-octadecenoyl-CoA + reduced [NADPH--hemoprotein reductase] + O2 = (9Z)-18-hydroxyoctadecenoyl-CoA + oxidized [NADPH--hemoprotein reductase] + H2O + H(+). The enzyme catalyses (9Z,12Z)-octadecadienoyl-CoA + reduced [NADPH--hemoprotein reductase] + O2 = (9Z,12Z)-18-hydroxyoctadecadienoyl-CoA + oxidized [NADPH--hemoprotein reductase] + H2O + H(+). Its function is as follows. Fatty acyl-CoA omega-hydroxylase essential for the production of omega-hydroxy fatty acids and the biosynthesis of triacylglycerol-/diacylglycerol-based estolide polyesters in the stigma. Substrate preference is 16:0-CoA &gt; 18:1-CoA &gt; 18:0-CoA. The chain is Cytochrome P450 86A22 from Petunia hybrida (Petunia).